Reading from the N-terminus, the 305-residue chain is Glutaminase (305 aa).

Substrate-binding residues include Ser61, Asn113, Glu158, Asn165, Tyr189, Tyr241, and Val259.

Belongs to the glutaminase family. In terms of assembly, homotetramer.

It catalyses the reaction L-glutamine + H2O = L-glutamate + NH4(+). This Clostridium botulinum (strain ATCC 19397 / Type A) protein is Glutaminase.